The chain runs to 1604 residues: Ubiquitin carboxyl-terminal hydrolase 32 (1604 aa).

EF-hand domains follow at residues 91-126 (KDEEKAKYIFSLFSSESGSYVVREEMERMLHVVDGK), 228-263 (IRPSLSEGLFNAFDENRDNHIDFKEISCGLSACCRG), and 264-299 (PLAERQKFCFKVFDVDRDGVLSRVELKDMVVALLEV). Ca(2+) contacts are provided by D241, N243, D245, H247, E252, D277, D279, D281, and E288. Positions 369-585 (ATPEEEGQII…SNLALPRPVI (217 aa)) constitute a DUSP domain. In terms of domain architecture, USP spans 734–1567 (TGLSNLGNTC…SAYILFYEQQ (834 aa)). Residue C743 is the Nucleophile of the active site. Residue Y1173 is modified to Phosphotyrosine. Residue S1350 is modified to Phosphoserine. Residues 1353–1432 (EEDVLLSKSP…SKENLDTSKE (80 aa)) form a disordered region. Positions 1360-1370 (KSPSSLSANVT) are enriched in polar residues. Residues 1371–1399 (SSPKGSPSSSRKSGASCPSSKNSSPNSSP) are compositionally biased toward low complexity. A phosphoserine mark is found at S1372 and S1376. Residues 1415 to 1424 (GSKNKLSNSK) show a composition bias toward polar residues. At S1454 the chain carries Phosphoserine. A disordered region spans residues 1484 to 1504 (SNGQLGNHSEEDSTDDQREET). Over residues 1491–1504 (HSEEDSTDDQREET) the composition is skewed to basic and acidic residues. H1526 (proton acceptor) is an active-site residue. Position 1588 is a phosphoserine (S1588). At C1601 the chain carries Cysteine methyl ester. A lipid anchor (S-farnesyl cysteine) is attached at C1601. A propeptide spans 1602 to 1604 (VLQ) (removed in mature form).

It belongs to the peptidase C19 family.

It localises to the golgi apparatus membrane. It carries out the reaction Thiol-dependent hydrolysis of ester, thioester, amide, peptide and isopeptide bonds formed by the C-terminal Gly of ubiquitin (a 76-residue protein attached to proteins as an intracellular targeting signal).. Its function is as follows. Deubiquitinase that can remove conjugated ubiquitin from target proteins, such as RAB7A and LAMTOR1. Acts as a positive regulator of the mTORC1 signaling by mediating deubiquitination of LAMTOR1, thereby promoting the association between LAMTOR1 and the lysosomal V-ATPase complex and subsequent activation of the mTORC1 complex. The sequence is that of Ubiquitin carboxyl-terminal hydrolase 32 from Mus musculus (Mouse).